The sequence spans 250 residues: 2,3-bisphosphoglycerate-dependent phosphoglycerate mutase (250 aa).

Residues 10–17 (RHGESVWN), 23–24 (TG), R62, 89–92 (ERHY), K100, 116–117 (RR), and 185–186 (GN) contribute to the substrate site. H11 acts as the Tele-phosphohistidine intermediate in catalysis. The active-site Proton donor/acceptor is E89.

This sequence belongs to the phosphoglycerate mutase family. BPG-dependent PGAM subfamily. In terms of assembly, homodimer.

The enzyme catalyses (2R)-2-phosphoglycerate = (2R)-3-phosphoglycerate. Its pathway is carbohydrate degradation; glycolysis; pyruvate from D-glyceraldehyde 3-phosphate: step 3/5. In terms of biological role, catalyzes the interconversion of 2-phosphoglycerate and 3-phosphoglycerate. The sequence is that of 2,3-bisphosphoglycerate-dependent phosphoglycerate mutase from Proteus mirabilis (strain HI4320).